We begin with the raw amino-acid sequence, 129 residues long: Small ribosomal subunit protein uS11 (129 aa).

Belongs to the universal ribosomal protein uS11 family. As to quaternary structure, part of the 30S ribosomal subunit. Interacts with proteins S7 and S18. Binds to IF-3.

Its function is as follows. Located on the platform of the 30S subunit, it bridges several disparate RNA helices of the 16S rRNA. Forms part of the Shine-Dalgarno cleft in the 70S ribosome. This is Small ribosomal subunit protein uS11 from Vibrio campbellii (strain ATCC BAA-1116).